The chain runs to 305 residues: Alpha-N-acetylgalactosaminide alpha-2,6-sialyltransferase 3 (305 aa).

Topologically, residues 1–8 (MACILKRK) are cytoplasmic. A helical; Signal-anchor for type II membrane protein membrane pass occupies residues 9–28 (SVIAVSFIAAFLFLLVVRLV). At 29-305 (NEVNFPLLLN…IFTHPNWTLS (277 aa)) the chain is on the lumenal side. Residues C80 and C229 are joined by a disulfide bond. N-linked (GlcNAc...) asparagine glycans are attached at residues N148, N239, and N301.

This sequence belongs to the glycosyltransferase 29 family. As to expression, expressed in brain and kidney. Observed in the epithelium of the proximal tubules, marginal expression was also found in the distal tubules and collecting tubules.

It is found in the golgi apparatus membrane. It carries out the reaction an alpha-Neu5Ac-(2-&gt;3)-beta-D-Gal-(1-&gt;3)-D-GlcNAc derivative + CMP-N-acetyl-beta-neuraminate = an alpha-Neu5Ac-(2-&gt;3)-beta-D-Gal-(1-&gt;3)-[alpha-Neu5Ac-(2-&gt;6)]-D-GlcNAc derivative + CMP + H(+). The enzyme catalyses a ganglioside GM1b (d18:1(4E)) + CMP-N-acetyl-beta-neuraminate = a ganglioside GD1alpha (d18:1(4E)) + CMP + H(+). The catalysed reaction is a globoside MSGG + CMP-N-acetyl-beta-neuraminate = a globoside DSGG + CMP + H(+). It catalyses the reaction 3-O-[alpha-Neu5Ac-(2-&gt;3)-beta-D-Gal-(1-&gt;3)-alpha-D-GalNAc]-L-Ser-[protein] + CMP-N-acetyl-beta-neuraminate = a 3-O-{alpha-Neu5Ac-(2-&gt;3)-beta-D-Gal-(1-&gt;3)-[alpha-Neu5Ac-(2-&gt;6)]-alpha-D-GalNAc}-L-seryl-[protein] + CMP + H(+). It carries out the reaction 3-O-[alpha-Neu5Ac-(2-&gt;3)-beta-D-Gal-(1-&gt;3)-alpha-D-GalNAc]-L-Thr-[protein] + CMP-N-acetyl-beta-neuraminate = a 3-O-{alpha-Neu5Ac-(2-&gt;3)-beta-D-Gal-(1-&gt;3)-[alpha-Neu5Ac-(2-&gt;6)]-alpha-D-GalNAc}-L-threonyl-[protein] + CMP + H(+). It functions in the pathway protein modification; protein glycosylation. The protein operates within glycolipid biosynthesis. Functionally, transfers the sialyl group (N-acetyl-alpha-neuraminyl or NeuAc) from CMP-NeuAc to the GalNAc residue on the NeuAc-alpha-2,3-Gal-beta-1,3-GalNAc sequence of glycoproteins and glycolipids forming an alpha-2,6-linkage. Produces branched type disialyl structures by transfer of a sialyl group onto a GalNAc residue inside the backbone core chains. ST6GalNAcIII prefers glycolipids to glycoproteins, predominantly catalyzing the biosynthesis of ganglioside GD1alpha from GM1b. GD1alpha is a critical molecule in the communication and interaction between neuronal cells and their supportive cells, particularly in brain tissues, and functions as an adhesion molecule in the process of metastasis. Sialylation of glycoproteins or glycosphingolipids is very important in tumor development, neuronal development, nerve repair, immunological processes and regulation of hormone sensitivity. This Homo sapiens (Human) protein is Alpha-N-acetylgalactosaminide alpha-2,6-sialyltransferase 3 (ST6GALNAC3).